We begin with the raw amino-acid sequence, 188 residues long: dTTP/UTP pyrophosphatase (188 aa).

The active-site Proton acceptor is Asp70.

This sequence belongs to the Maf family. YhdE subfamily. The cofactor is a divalent metal cation.

It localises to the cytoplasm. The catalysed reaction is dTTP + H2O = dTMP + diphosphate + H(+). It catalyses the reaction UTP + H2O = UMP + diphosphate + H(+). Its function is as follows. Nucleoside triphosphate pyrophosphatase that hydrolyzes dTTP and UTP. May have a dual role in cell division arrest and in preventing the incorporation of modified nucleotides into cellular nucleic acids. The chain is dTTP/UTP pyrophosphatase from Clostridium beijerinckii (strain ATCC 51743 / NCIMB 8052) (Clostridium acetobutylicum).